The chain runs to 454 residues: Chromosomal replication initiator protein DnaA (454 aa).

Positions 1–77 are domain I, interacts with DnaA modulators; it reads MASLNENQKF…GFEVFGRMID (77 aa). The segment at 77–115 is domain II; sequence DYELYANDELTDIELRRLNNQSPVDEPLSVAKPTSPLVS. A domain III, AAA+ region region spans residues 116–332; it reads GLNEKYNFEN…GALNRVEFVA (217 aa). The ATP site is built by glycine 160, glycine 162, lysine 163, and threonine 164. Positions 333 to 454 are domain IV, binds dsDNA; that stretch reads RANGISIVDI…KDIDSIKRKF (122 aa).

It belongs to the DnaA family. As to quaternary structure, oligomerizes as a right-handed, spiral filament on DNA at oriC.

It localises to the cytoplasm. In terms of biological role, plays an essential role in the initiation and regulation of chromosomal replication. ATP-DnaA binds to the origin of replication (oriC) to initiate formation of the DNA replication initiation complex once per cell cycle. Binds the DnaA box (a 9 base pair repeat at the origin) and separates the double-stranded (ds)DNA. Forms a right-handed helical filament on oriC DNA; dsDNA binds to the exterior of the filament while single-stranded (ss)DNA is stabiized in the filament's interior. The ATP-DnaA-oriC complex binds and stabilizes one strand of the AT-rich DNA unwinding element (DUE), permitting loading of DNA polymerase. After initiation quickly degrades to an ADP-DnaA complex that is not apt for DNA replication. Binds acidic phospholipids. The chain is Chromosomal replication initiator protein DnaA from Lactococcus lactis subsp. cremoris (strain MG1363).